The primary structure comprises 170 residues: ATP synthase subunit b (170 aa).

The chain crosses the membrane as a helical span at residues 4–24 (ILLLGLALAPVALFASQGAVE).

This sequence belongs to the ATPase B chain family. As to quaternary structure, F-type ATPases have 2 components, F(1) - the catalytic core - and F(0) - the membrane proton channel. F(1) has five subunits: alpha(3), beta(3), gamma(1), delta(1), epsilon(1). F(0) has three main subunits: a(1), b(2) and c(10-14). The alpha and beta chains form an alternating ring which encloses part of the gamma chain. F(1) is attached to F(0) by a central stalk formed by the gamma and epsilon chains, while a peripheral stalk is formed by the delta and b chains.

The protein resides in the cell inner membrane. F(1)F(0) ATP synthase produces ATP from ADP in the presence of a proton or sodium gradient. F-type ATPases consist of two structural domains, F(1) containing the extramembraneous catalytic core and F(0) containing the membrane proton channel, linked together by a central stalk and a peripheral stalk. During catalysis, ATP synthesis in the catalytic domain of F(1) is coupled via a rotary mechanism of the central stalk subunits to proton translocation. Functionally, component of the F(0) channel, it forms part of the peripheral stalk, linking F(1) to F(0). This is ATP synthase subunit b from Aliarcobacter butzleri (strain RM4018) (Arcobacter butzleri).